Here is a 47-residue protein sequence, read N- to C-terminus: Defensin-like protein 2 (47 aa).

4 disulfides stabilise this stretch: C5/C47, C16/C36, C22/C43, and C26/C45.

It belongs to the DEFL family.

Functionally, fabatins have antibacterial activity against Gram-positive and Gram-negative bacteria. High activity against P.aeruginosa. No activity against S.cerevisiae and C.albicans. The chain is Defensin-like protein 2 from Vicia faba (Broad bean).